A 1562-amino-acid polypeptide reads, in one-letter code: Pikromycin polyketide synthase component PikAIII (1562 aa).

Residues 34–464 enclose the Ketosynthase family 3 (KS3) domain; the sequence is HEPVAIVGMA…GTNAHVVLEE (431 aa). The module 5 stretch occupies residues 37–1475; sequence VAIVGMACRL…TPAALAAHLH (1439 aa). Residue Cys-209 is the Acyl-thioester intermediate; for beta-ketoacyl synthase activity of the active site. Catalysis depends on for beta-ketoacyl synthase activity residues His-344 and His-384. The tract at residues 565-866 is acyltransferase; it reads FVFPGQGTQW…GGQERLVTSL (302 aa). The active-site Acyl-ester intermediate; for acyltransferase activity is Ser-655. The segment at 1116 to 1293 is beta-ketoacyl reductase; the sequence is GTVLITGGTG…ATSVAWGLWA (178 aa). Residues 1124 to 1127, 1147 to 1150, 1176 to 1177, Lys-1226, and 1248 to 1249 contribute to the NADP(+) site; these read TGAL, SRSG, DV, and YS. Catalysis depends on Tyr-1263, which acts as the Acyl-ester intermediate; for beta-ketoacyl reductase activity. The 76-residue stretch at 1403-1478 folds into the Carrier domain; sequence PALLTLVRTH…ALAAHLHEAY (76 aa). An O-(pantetheine 4'-phosphoryl)serine modification is found at Ser-1438. A disordered region spans residues 1519–1548; it reads GIEPEPGSGGSDGGAADPGAEPEASIDDLD. Residues 1532–1541 are compositionally biased toward low complexity; that stretch reads GAADPGAEPE.

In terms of assembly, homodimer. Pikromycin PKS consists of a combination of multimodular (PikAI and PikAII) and monomodular (PikAIII and PikAIV) polypeptides each coding for a functional synthase subunit which participates in 1 (monomodular) or 2 (multimodular) of the six FAS-like elongation steps required for formation of the polyketide. Module 1, 2, 3, 4, 5, and 6 participating in biosynthesis steps 1, 2, 3, 4, 5, and 6, respectively. Requires pantetheine 4'-phosphate as cofactor.

It catalyses the reaction 5 (S)-methylmalonyl-CoA + malonyl-CoA + 5 NADPH + 11 H(+) = 10-deoxymethynolide + 6 CO2 + 5 NADP(+) + 6 CoA + 2 H2O. It carries out the reaction 6 (S)-methylmalonyl-CoA + malonyl-CoA + 5 NADPH + 12 H(+) = narbonolide + 7 CO2 + 5 NADP(+) + 7 CoA + 2 H2O. It functions in the pathway antibiotic biosynthesis. In terms of biological role, involved in the biosynthesis of 12- and 14-membered ring macrolactone antibiotics such as methymycin and neomethymycin, and pikromycin and narbomycin, respectively. Component of the pikromycin PKS which catalyzes the biosynthesis of both precursors 10-deoxymethynolide (12-membered ring macrolactone) and narbonolide (14-membered ring macrolactone). Chain elongation through PikAI, PikAII and PikAIII followed by thioesterase catalyzed termination results in the production of 10-deoxymethynolide, while continued elongation through PikAIV, followed by thioesterase (TE) catalyzed cyclization results in the biosynthesis of the narbonolide. The polypeptide is Pikromycin polyketide synthase component PikAIII (Streptomyces venezuelae).